Consider the following 762-residue polypeptide: FAST kinase domain-containing protein 5, mitochondrial (762 aa).

Serine 95 bears the Phosphoserine mark. Lysine 506 is modified (N6-acetyllysine). Positions 695–755 (LAIQFTNKNQ…RLEKLAYLHE (61 aa)) constitute an RAP domain.

The protein belongs to the FAST kinase family. Found in a complex with GRSF1, DDX28, DHX30 and FASTKD2. Associates with the 12S mitochondrial rRNA (12S mt-rRNA). As to expression, expression detected in spleen, testis, colon, heart, smooth muscle, kidney, brain, lung, liver, brown and white adipose tissue.

It localises to the mitochondrion matrix. It is found in the mitochondrion nucleoid. Plays an important role in the processing of non-canonical mitochondrial mRNA precursors. In Mus musculus (Mouse), this protein is FAST kinase domain-containing protein 5, mitochondrial (Fastkd5).